Consider the following 489-residue polypeptide: Tandem C2 domains nuclear protein (489 aa).

A phosphoserine mark is found at S82, S155, S167, S173, and S210. The interval 189–214 (DSFSSVPSSSSSRKNSQGSNRSLDTI) is disordered. Residues 191 to 210 (FSSVPSSSSSRKNSQGSNRS) show a composition bias toward low complexity. Residues T213 and T215 each carry the phosphothreonine modification. A Phosphoserine modification is found at S217. 2 C2 domains span residues 222-341 (DLGR…SLEI) and 343-470 (APSK…NQWK). The Nuclear localization signal signature appears at 446-448 (RRK).

It is found in the nucleus. In Mus musculus (Mouse), this protein is Tandem C2 domains nuclear protein (Tc2n).